The chain runs to 185 residues: Anaphase-promoting complex subunit 10 (185 aa).

N-acetylthreonine is present on Thr2. Residues 2-185 (TTPNKTPPGA…IDFMMYRSIR (184 aa)) form the DOC domain. Lys169 is modified (N6-acetyllysine).

It belongs to the APC10 family. The mammalian APC/C is composed at least of 14 distinct subunits ANAPC1, ANAPC2, CDC27/APC3, ANAPC4, ANAPC5, CDC16/APC6, ANAPC7, CDC23/APC8, ANAPC10, ANAPC11, CDC26/APC12, ANAPC13, ANAPC15 and ANAPC16 that assemble into a complex of at least 19 chains with a combined molecular mass of around 1.2 MDa; APC/C interacts with FZR1 and FBXO5. The C-terminus of APC10 binds to CDC27/APC3. Interacts with PIWIL1; interaction only takes place when PIWIL1 binds piRNA. Interacts with FBXO43; the interaction is direct.

Its pathway is protein modification; protein ubiquitination. In terms of biological role, component of the anaphase promoting complex/cyclosome (APC/C), a cell cycle-regulated E3 ubiquitin ligase that controls progression through mitosis and the G1 phase of the cell cycle. The APC/C complex acts by mediating ubiquitination and subsequent degradation of target proteins: it mainly mediates the formation of 'Lys-11'-linked polyubiquitin chains and, to a lower extent, the formation of 'Lys-48'- and 'Lys-63'-linked polyubiquitin chains. The APC/C complex catalyzes assembly of branched 'Lys-11'-/'Lys-48'-linked branched ubiquitin chains on target proteins. The protein is Anaphase-promoting complex subunit 10 (Anapc10) of Mus musculus (Mouse).